We begin with the raw amino-acid sequence, 105 residues long: Small ribosomal subunit protein eS25 (105 aa).

Belongs to the eukaryotic ribosomal protein eS25 family. In terms of assembly, component of the small ribosomal subunit. Mature ribosomes consist of a small (40S) and a large (60S) subunit. The 40S subunit contains about 32 different proteins and 1 molecule of RNA (18S). The 60S subunit contains 45 different proteins and 3 molecules of RNA (25S, 5.8S and 5S).

It localises to the cytoplasm. In terms of biological role, component of the ribosome, a large ribonucleoprotein complex responsible for the synthesis of proteins in the cell. The small ribosomal subunit (SSU) binds messenger RNAs (mRNAs) and translates the encoded message by selecting cognate aminoacyl-transfer RNA (tRNA) molecules. The large subunit (LSU) contains the ribosomal catalytic site termed the peptidyl transferase center (PTC), which catalyzes the formation of peptide bonds, thereby polymerizing the amino acids delivered by tRNAs into a polypeptide chain. The nascent polypeptides leave the ribosome through a tunnel in the LSU and interact with protein factors that function in enzymatic processing, targeting, and the membrane insertion of nascent chains at the exit of the ribosomal tunnel. This Candida albicans (strain SC5314 / ATCC MYA-2876) (Yeast) protein is Small ribosomal subunit protein eS25 (RPS25B).